A 212-amino-acid chain; its full sequence is Peptide methionine sulfoxide reductase MsrA (212 aa).

The active site involves C52.

The protein belongs to the MsrA Met sulfoxide reductase family.

It catalyses the reaction L-methionyl-[protein] + [thioredoxin]-disulfide + H2O = L-methionyl-(S)-S-oxide-[protein] + [thioredoxin]-dithiol. The catalysed reaction is [thioredoxin]-disulfide + L-methionine + H2O = L-methionine (S)-S-oxide + [thioredoxin]-dithiol. Its function is as follows. Has an important function as a repair enzyme for proteins that have been inactivated by oxidation. Catalyzes the reversible oxidation-reduction of methionine sulfoxide in proteins to methionine. This is Peptide methionine sulfoxide reductase MsrA from Yersinia enterocolitica serotype O:8 / biotype 1B (strain NCTC 13174 / 8081).